A 638-amino-acid chain; its full sequence is Signal recognition particle receptor subunit alpha (638 aa).

3 disordered regions span residues 129–205, 218–245, and 262–315; these read KIRA…VELS, IQKH…KKAP, and SAPT…ATKG. 2 stretches are compositionally biased toward basic and acidic residues: residues 137-146 and 153-165; these read KKFEDSEKAK and IETR…EKAK. Ser177 bears the Phosphoserine mark. Over residues 218–239 the composition is skewed to basic and acidic residues; sequence IQKHGRGLEKSSKSTKSDAPKE. Thr284 carries the phosphothreonine modification. Residues Ser296, Ser297, and Ser298 each carry the phosphoserine modification. The segment covering 304–314 has biased composition (polar residues); that stretch reads AQNASKPSATK. The interval 419–636 is NG domain; that stretch reads YVVTFCGVNG…NAKAVVAALM (218 aa). 425–432 is a GTP binding site; that stretch reads GVNGVGKS. A Phosphoserine modification is found at Ser473. 520 to 524 serves as a coordination point for GTP; sequence DTAGR. Thr578 carries the phosphothreonine modification. 588 to 591 lines the GTP pocket; it reads TKFD.

Belongs to the GTP-binding SRP family. As to quaternary structure, heterodimer with SRPRB. Interacts with the signal recognition particle (SRP) complex subunit SRP54.

The protein localises to the endoplasmic reticulum membrane. Component of the SRP (signal recognition particle) receptor. Ensures, in conjunction with the signal recognition particle, the correct targeting of the nascent secretory proteins to the endoplasmic reticulum membrane system. Forms a guanosine 5'-triphosphate (GTP)-dependent complex with the SRP subunit SRP54. SRP receptor compaction and GTPase rearrangement drive SRP-mediated cotranslational protein translocation into the ER. In Canis lupus familiaris (Dog), this protein is Signal recognition particle receptor subunit alpha.